A 406-amino-acid polypeptide reads, in one-letter code: Succinylornithine transaminase (406 aa).

Lysine 252 carries the post-translational modification N6-(pyridoxal phosphate)lysine.

The protein belongs to the class-III pyridoxal-phosphate-dependent aminotransferase family. AstC subfamily. Pyridoxal 5'-phosphate serves as cofactor.

It catalyses the reaction N(2)-succinyl-L-ornithine + 2-oxoglutarate = N-succinyl-L-glutamate 5-semialdehyde + L-glutamate. The protein operates within amino-acid degradation; L-arginine degradation via AST pathway; L-glutamate and succinate from L-arginine: step 3/5. Catalyzes the transamination of N(2)-succinylornithine and alpha-ketoglutarate into N(2)-succinylglutamate semialdehyde and glutamate. Can also act as an acetylornithine aminotransferase. The polypeptide is Succinylornithine transaminase (Shigella sonnei (strain Ss046)).